The primary structure comprises 392 residues: Major outer membrane protein P.IA (392 aa).

Residues 1–19 form the signal peptide; that stretch reads MRKKLTALVLSALPLAAVA.

It belongs to the Gram-negative porin family. Homotrimer.

It is found in the cell outer membrane. Functionally, serves as a slightly cation selective porin. Major antigen on the gonococcal cell surface and it may have pathogenic properties in addition to its porin activity. The protein is Major outer membrane protein P.IA (porA) of Neisseria meningitidis serogroup B / serotype 15 (strain H44/76).